Here is a 603-residue protein sequence, read N- to C-terminus: NADH-ubiquinone oxidoreductase chain 5 (603 aa).

15 consecutive transmembrane segments (helical) span residues 4–24 (ISTLTLASLIILTLPITTTLL), 35–55 (ITKTAVTYAFVISLIPTLLFV), 84–104 (FFSLTFMPIALFITWSIMEFS), 121–141 (LLLFLITMLILVSANNLLQLF), 177–197 (IGDMGFIMMMAWFIIHLNSWE), 213–233 (LLGLLLASTGKSAQFGLHPWL), 241–261 (TPVSALLHSSTMVMAGVFTLI), 273–293 (VQTSTLCLGAITTLFTAICAL), 301–320 (IIALSTSSQLGLMMVTIGIN), 325–347 (AFTHMCTHAFFKAMLFLSSGSII), 366–386 (MPITSTAIIIGSLALTGMPFL), 413–433 (LIAVSMTASYSTRIIFFALLG), 457–477 (LILGSIFMGFFISMNTIPHTT), 480–500 (MTMPPHLKFMALAVTLLGFTV), and 583–603 (LMKLYFLSFLLSITLGLLIAL).

It belongs to the complex I subunit 5 family. As to quaternary structure, core subunit of respiratory chain NADH dehydrogenase (Complex I) which is composed of 45 different subunits.

The protein resides in the mitochondrion inner membrane. It catalyses the reaction a ubiquinone + NADH + 5 H(+)(in) = a ubiquinol + NAD(+) + 4 H(+)(out). Functionally, core subunit of the mitochondrial membrane respiratory chain NADH dehydrogenase (Complex I) which catalyzes electron transfer from NADH through the respiratory chain, using ubiquinone as an electron acceptor. Essential for the catalytic activity and assembly of complex I. The protein is NADH-ubiquinone oxidoreductase chain 5 (MT-ND5) of Mammuthus primigenius (Siberian woolly mammoth).